A 143-amino-acid polypeptide reads, in one-letter code: Holo-[acyl-carrier-protein] synthase (143 aa).

Aspartate 9 and glutamate 63 together coordinate Mg(2+).

The protein belongs to the P-Pant transferase superfamily. AcpS family. Mg(2+) is required as a cofactor.

It localises to the cytoplasm. The enzyme catalyses apo-[ACP] + CoA = holo-[ACP] + adenosine 3',5'-bisphosphate + H(+). In terms of biological role, transfers the 4'-phosphopantetheine moiety from coenzyme A to a Ser of acyl-carrier-protein. The chain is Holo-[acyl-carrier-protein] synthase from Burkholderia pseudomallei (strain 1106a).